The following is a 401-amino-acid chain: 1-deoxy-D-xylulose 5-phosphate reductoisomerase (401 aa).

Positions 11, 12, 13, 14, 38, 39, and 125 each coordinate NADPH. Lysine 126 contacts 1-deoxy-D-xylulose 5-phosphate. Glutamate 127 lines the NADPH pocket. Residue aspartate 151 coordinates Mn(2+). Positions 152, 153, 179, and 202 each coordinate 1-deoxy-D-xylulose 5-phosphate. Residue glutamate 153 coordinates Mn(2+). Glycine 208 contributes to the NADPH binding site. Residues serine 215, asparagine 220, lysine 221, and glutamate 224 each coordinate 1-deoxy-D-xylulose 5-phosphate. Residue glutamate 224 coordinates Mn(2+).

The protein belongs to the DXR family. Requires Mg(2+) as cofactor. It depends on Mn(2+) as a cofactor.

The enzyme catalyses 2-C-methyl-D-erythritol 4-phosphate + NADP(+) = 1-deoxy-D-xylulose 5-phosphate + NADPH + H(+). It participates in isoprenoid biosynthesis; isopentenyl diphosphate biosynthesis via DXP pathway; isopentenyl diphosphate from 1-deoxy-D-xylulose 5-phosphate: step 1/6. In terms of biological role, catalyzes the NADPH-dependent rearrangement and reduction of 1-deoxy-D-xylulose-5-phosphate (DXP) to 2-C-methyl-D-erythritol 4-phosphate (MEP). In Paraburkholderia xenovorans (strain LB400), this protein is 1-deoxy-D-xylulose 5-phosphate reductoisomerase.